Consider the following 383-residue polypeptide: Lipid-A-disaccharide synthase (383 aa).

The protein belongs to the LpxB family.

The enzyme catalyses a lipid X + a UDP-2-N,3-O-bis[(3R)-3-hydroxyacyl]-alpha-D-glucosamine = a lipid A disaccharide + UDP + H(+). Its pathway is bacterial outer membrane biogenesis; LPS lipid A biosynthesis. In terms of biological role, condensation of UDP-2,3-diacylglucosamine and 2,3-diacylglucosamine-1-phosphate to form lipid A disaccharide, a precursor of lipid A, a phosphorylated glycolipid that anchors the lipopolysaccharide to the outer membrane of the cell. This is Lipid-A-disaccharide synthase from Trichlorobacter lovleyi (strain ATCC BAA-1151 / DSM 17278 / SZ) (Geobacter lovleyi).